The sequence spans 299 residues: tRNA uridine(34) hydroxylase (299 aa).

Residues 132–226 (AGRPVVMLDT…YFEEVGGAHY (95 aa)) form the Rhodanese domain. Cysteine 186 (cysteine persulfide intermediate) is an active-site residue.

Belongs to the TrhO family.

The catalysed reaction is uridine(34) in tRNA + AH2 + O2 = 5-hydroxyuridine(34) in tRNA + A + H2O. In terms of biological role, catalyzes oxygen-dependent 5-hydroxyuridine (ho5U) modification at position 34 in tRNAs. This Burkholderia pseudomallei (strain 1106a) protein is tRNA uridine(34) hydroxylase.